Reading from the N-terminus, the 228-residue chain is Phosphoglycolate phosphatase (228 aa).

Catalysis depends on Asp12, which acts as the Nucleophile. Mg(2+) contacts are provided by Asp12, Asp14, and Asp177.

It belongs to the HAD-like hydrolase superfamily. CbbY/CbbZ/Gph/YieH family. The cofactor is Mg(2+).

It catalyses the reaction 2-phosphoglycolate + H2O = glycolate + phosphate. The protein operates within organic acid metabolism; glycolate biosynthesis; glycolate from 2-phosphoglycolate: step 1/1. Specifically catalyzes the dephosphorylation of 2-phosphoglycolate. Is involved in the dissimilation of the intracellular 2-phosphoglycolate formed during the DNA repair of 3'-phosphoglycolate ends, a major class of DNA lesions induced by oxidative stress. This chain is Phosphoglycolate phosphatase, found in Vibrio vulnificus (strain YJ016).